The primary structure comprises 21 residues: Hemocyanin subunit 1 (21 aa).

It belongs to the tyrosinase family. Hemocyanin subfamily. Hemolymph.

It is found in the secreted. The protein localises to the extracellular space. Functionally, hemocyanins are copper-containing oxygen carriers occurring freely dissolved in the hemolymph of many mollusks and arthropods. This chain is Hemocyanin subunit 1, found in Maja squinado (Mediterranean spider crab).